The primary structure comprises 350 residues: MEQNSAWFMEAKPVAIWLFLCSVMVILMVGIGGFTRLSKAGLSITEWKPITGTLPPLSEQDWLQEKLKYEATPEYKALNYGISMEEFRAIYLIEYVHRLVARLTGLVFVLPFIYFTLRRKISKKVVIKLFVALLFGALQAFAGWYMVKSGLVAKPHVSHYRLALHLLLALIIFALFSYQFFDYQIRPKQTKLKISCNTKYYVGIILVLIMIQIIFGAFVAGLNAGLIYNTFPLMDGQIVPEDLFFLQPTWLNIFENRATVQFIHRALALLILTLVVILTVKNASIKPVYIMLLSVIIQIILGVITLLLHIPIAIAIAHQVFSFILFGSSLYFLCYLRKQTTSPICTFFPS.

A run of 8 helical transmembrane segments spans residues 14-34, 95-115, 125-145, 162-182, 202-222, 260-280, 296-316, and 317-337; these read VAIWLFLCSVMVILMVGIGGF, YVHRLVARLTGLVFVLPFIYF, VVIKLFVALLFGALQAFAGWY, LALHLLLALIIFALFSYQFFD, VGIILVLIMIQIIFGAFVAGL, VQFIHRALALLILTLVVILTV, IIQIILGVITLLLHIPIAIAI, and AHQVFSFILFGSSLYFLCYLR. His264 provides a ligand contact to heme. Position 318 (His318) interacts with heme.

It belongs to the COX15/CtaA family. Type 2 subfamily. As to quaternary structure, interacts with CtaB. The cofactor is heme b.

The protein localises to the cell membrane. It catalyses the reaction Fe(II)-heme o + 2 A + H2O = Fe(II)-heme a + 2 AH2. The protein operates within porphyrin-containing compound metabolism; heme A biosynthesis; heme A from heme O: step 1/1. Catalyzes the conversion of heme O to heme A by two successive hydroxylations of the methyl group at C8. The first hydroxylation forms heme I, the second hydroxylation results in an unstable dihydroxymethyl group, which spontaneously dehydrates, resulting in the formyl group of heme A. The protein is Heme A synthase of Wolbachia pipientis wMel.